A 164-amino-acid polypeptide reads, in one-letter code: DNA-directed RNA polymerase 19 kDa subunit (164 aa).

Acidic residues predominate over residues 1-35; it reads MADTDDIIDYESDDLTEYEDDEEEEEDGESLETSD. A disordered region spans residues 1–39; sequence MADTDDIIDYESDDLTEYEDDEEEEEDGESLETSDIDPK.

Belongs to the poxviridae DNA-directed RNA polymerase 19 kDa subunit family. As to quaternary structure, the DNA-dependent RNA polymerase used for intermediate and late genes expression consists of eight subunits Rpo30/OPG66, Rpo7/OPG90, Rpo22/OPG103, Rpo147/OPG105, Rpo18/OPG119, Rpo19/OPG131, Rpo132/OPG151 and Rpo35/OPG156. The same holoenzyme, with the addition of the transcription-specificity factor OPG109, is used for early gene expression.

Its subcellular location is the virion. It catalyses the reaction RNA(n) + a ribonucleoside 5'-triphosphate = RNA(n+1) + diphosphate. In terms of biological role, part of the DNA-dependent RNA polymerase which catalyzes the transcription of viral DNA into RNA using the four ribonucleoside triphosphates as substrates. Responsible for the transcription of early, intermediate and late genes. DNA-dependent RNA polymerase associates with the early transcription factor (ETF), itself composed of OPG118 and OPG133, thereby allowing the early genes transcription. Late transcription, and probably also intermediate transcription, require newly synthesized RNA polymerase. This chain is DNA-directed RNA polymerase 19 kDa subunit (OPG131), found in Homo sapiens (Human).